Reading from the N-terminus, the 210-residue chain is Superoxide dismutase [Mn], mitochondrial (210 aa).

Residues histidine 29, histidine 77, aspartate 164, and histidine 168 each contribute to the Mn(2+) site.

This sequence belongs to the iron/manganese superoxide dismutase family. As to quaternary structure, homotetramer. Mn(2+) serves as cofactor.

It localises to the mitochondrion matrix. The enzyme catalyses 2 superoxide + 2 H(+) = H2O2 + O2. In terms of biological role, destroys superoxide anion radicals which are normally produced within the cells and which are toxic to biological systems. The chain is Superoxide dismutase [Mn], mitochondrial (sodB) from Aspergillus niger.